The sequence spans 965 residues: Aminopeptidase N (965 aa).

At 2–8 the chain is on the cytoplasmic side; the sequence is AKGFYIS. Residues 9 to 32 traverse the membrane as a helical; Signal-anchor for type II membrane protein segment; sequence KTLGILGILLGVAAVCTIIALSVV. Residues 33–68 form a cytosolic Ser/Thr-rich junction region; that stretch reads YAQEKNRNAENSAIAPTLPGSTSATTSTTNPAIDES. Topologically, residues 33-965 are extracellular; the sequence is YAQEKNRNAE…VVLKWFTENS (933 aa). Residues 44 to 68 form a disordered region; it reads SAIAPTLPGSTSATTSTTNPAIDES. Positions 47-64 are enriched in low complexity; the sequence is APTLPGSTSATTSTTNPA. The interval 69 to 965 is metalloprotease; that stretch reads KPWNQYRLPK…VVLKWFTENS (897 aa). 2 N-linked (GlcNAc...) asparagine glycosylation sites follow: Asn-114 and Asn-128. The residue at position 176 (Tyr-176) is a Sulfotyrosine. Asn-234, Asn-242, and Asn-264 each carry an N-linked (GlcNAc...) asparagine glycan. 351 to 355 contacts substrate; it reads GAMEN. His-387 is a binding site for Zn(2+). Glu-388 serves as the catalytic Proton acceptor. The Zn(2+) site is built by His-391 and Glu-410. N-linked (GlcNAc...) asparagine glycans are attached at residues Asn-555, Asn-606, and Asn-624. A disulfide bond links Cys-760 and Cys-767. The N-linked (GlcNAc...) asparagine glycan is linked to Asn-780. Cys-797 and Cys-833 are disulfide-bonded. The residue at position 852 (Tyr-852) is a Phosphotyrosine.

It belongs to the peptidase M1 family. In terms of assembly, homodimer. Interacts with SLC6A19. Zn(2+) is required as a cofactor. Sulfated. Post-translationally, N- and O-glycosylated. In terms of processing, may undergo proteolysis and give rise to a soluble form. Widely distributed throughout the CNS. Particularly abundant in kidney and intestinal microvilli, also detected in lung and liver. Weakly expressed in heart and aorta.

It localises to the cell membrane. The enzyme catalyses Release of an N-terminal amino acid, Xaa-|-Yaa- from a peptide, amide or arylamide. Xaa is preferably Ala, but may be most amino acids including Pro (slow action). When a terminal hydrophobic residue is followed by a prolyl residue, the two may be released as an intact Xaa-Pro dipeptide.. Broad specificity aminopeptidase which plays a role in the final digestion of peptides generated from hydrolysis of proteins by gastric and pancreatic proteases. Also involved in the processing of various peptides including peptide hormones, such as angiotensin III and IV, neuropeptides, and chemokines. May also be involved the cleavage of peptides bound to major histocompatibility complex class II molecules of antigen presenting cells. May have a role in angiogenesis and promote cholesterol crystallization. May have a role in amino acid transport by acting as binding partner of amino acid transporter SLC6A19 and regulating its activity. The sequence is that of Aminopeptidase N (Anpep) from Rattus norvegicus (Rat).